The primary structure comprises 364 residues: Aminomethyltransferase (364 aa).

It belongs to the GcvT family. As to quaternary structure, the glycine cleavage system is composed of four proteins: P, T, L and H.

The enzyme catalyses N(6)-[(R)-S(8)-aminomethyldihydrolipoyl]-L-lysyl-[protein] + (6S)-5,6,7,8-tetrahydrofolate = N(6)-[(R)-dihydrolipoyl]-L-lysyl-[protein] + (6R)-5,10-methylene-5,6,7,8-tetrahydrofolate + NH4(+). Functionally, the glycine cleavage system catalyzes the degradation of glycine. The protein is Aminomethyltransferase of Shigella sonnei (strain Ss046).